The sequence spans 328 residues: Methionyl-tRNA formyltransferase (328 aa).

110 to 113 lines the (6S)-5,6,7,8-tetrahydrofolate pocket; that stretch reads SLLP.

It belongs to the Fmt family.

It catalyses the reaction L-methionyl-tRNA(fMet) + (6R)-10-formyltetrahydrofolate = N-formyl-L-methionyl-tRNA(fMet) + (6S)-5,6,7,8-tetrahydrofolate + H(+). Functionally, attaches a formyl group to the free amino group of methionyl-tRNA(fMet). The formyl group appears to play a dual role in the initiator identity of N-formylmethionyl-tRNA by promoting its recognition by IF2 and preventing the misappropriation of this tRNA by the elongation apparatus. The chain is Methionyl-tRNA formyltransferase from Prochlorococcus marinus subsp. pastoris (strain CCMP1986 / NIES-2087 / MED4).